Reading from the N-terminus, the 422-residue chain is 2-(3-amino-3-carboxypropyl)histidine synthase subunit 1 (422 aa).

Residues cysteine 128, cysteine 234, and cysteine 363 each contribute to the [4Fe-4S] cluster site.

This sequence belongs to the DPH1/DPH2 family. DPH1 subfamily. Component of the 2-(3-amino-3-carboxypropyl)histidine synthase complex composed of DPH1, DPH2, DPH3 and a NADH-dependent reductase, predominantly CBR1. [4Fe-4S] cluster is required as a cofactor.

It localises to the cytoplasm. The enzyme catalyses L-histidyl-[translation elongation factor 2] + S-adenosyl-L-methionine = 2-[(3S)-amino-3-carboxypropyl]-L-histidyl-[translation elongation factor 2] + S-methyl-5'-thioadenosine + H(+). It participates in protein modification; peptidyl-diphthamide biosynthesis. Its function is as follows. Catalyzes the first step of diphthamide biosynthesis, a post-translational modification of histidine which occurs in elongation factor 2. DPH1 and DPH2 transfer a 3-amino-3-carboxypropyl (ACP) group from S-adenosyl-L-methionine (SAM) to a histidine residue, the reaction is assisted by a reduction system comprising DPH3 and a NADH-dependent reductase, predominantly CBR1. This chain is 2-(3-amino-3-carboxypropyl)histidine synthase subunit 1 (DPH1), found in Kluyveromyces lactis (strain ATCC 8585 / CBS 2359 / DSM 70799 / NBRC 1267 / NRRL Y-1140 / WM37) (Yeast).